Consider the following 506-residue polypeptide: Probable alpha-L-arabinofuranosidase B (506 aa).

The first 26 residues, 1 to 26 (MLPQLSIERASVFALGLIATGSLVVA), serve as a signal peptide directing secretion. Residues 27 to 343 (GPCDIYSAGG…ANIVAAKYAT (317 aa)) form a catalytic region. Disulfide bonds link Cys29-Cys39, Cys89-Cys94, and Cys184-Cys185. Substrate is bound at residue Asp227. Glu229 serves as the catalytic Nucleophile. Substrate is bound at residue Asn230. Residue Asn240 is glycosylated (N-linked (GlcNAc...) asparagine). Gly304 contributes to the substrate binding site. Asp305 functions as the Proton donor in the catalytic mechanism. The interval 344–506 (ASLTSGPKLT…VSWVISTGFA (163 aa)) is ABD. An intrachain disulfide couples Cys409 to Cys447. Substrate contacts are provided by His424, Asn426, Phe427, Asp443, His471, Leu476, and Asp496.

Belongs to the glycosyl hydrolase 54 family.

The protein localises to the secreted. The catalysed reaction is Hydrolysis of terminal non-reducing alpha-L-arabinofuranoside residues in alpha-L-arabinosides.. It functions in the pathway glycan metabolism; L-arabinan degradation. In terms of biological role, alpha-L-arabinofuranosidase involved in the degradation of arabinoxylan, a major component of plant hemicellulose. Able to hydrolyze 1,5-, 1,3- and 1,2-alpha-linkages not only in L-arabinofuranosyl oligosaccharides, but also in polysaccharides containing terminal non-reducing L-arabinofuranoses in side chains, like L-arabinan, arabinogalactan and arabinoxylan. The polypeptide is Probable alpha-L-arabinofuranosidase B (abfB) (Aspergillus fumigatus (strain ATCC MYA-4609 / CBS 101355 / FGSC A1100 / Af293) (Neosartorya fumigata)).